Reading from the N-terminus, the 203-residue chain is ATP-dependent Clp protease proteolytic subunit 1 (203 aa).

Catalysis depends on S101, which acts as the Nucleophile. The active site involves H126.

The protein belongs to the peptidase S14 family. In terms of assembly, fourteen ClpP subunits assemble into 2 heptameric rings which stack back to back to give a disk-like structure with a central cavity, resembling the structure of eukaryotic proteasomes.

The protein localises to the cytoplasm. The enzyme catalyses Hydrolysis of proteins to small peptides in the presence of ATP and magnesium. alpha-casein is the usual test substrate. In the absence of ATP, only oligopeptides shorter than five residues are hydrolyzed (such as succinyl-Leu-Tyr-|-NHMec, and Leu-Tyr-Leu-|-Tyr-Trp, in which cleavage of the -Tyr-|-Leu- and -Tyr-|-Trp bonds also occurs).. Its function is as follows. Cleaves peptides in various proteins in a process that requires ATP hydrolysis. Has a chymotrypsin-like activity. Plays a major role in the degradation of misfolded proteins. The polypeptide is ATP-dependent Clp protease proteolytic subunit 1 (Synechococcus sp. (strain JA-2-3B'a(2-13)) (Cyanobacteria bacterium Yellowstone B-Prime)).